The sequence spans 85 residues: Beta-toxin BmKAs1 (85 aa).

The signal sequence occupies residues 1-19 (MKIIIFLIVCSFVLIGVKA). Residues 20 to 82 (DNGYLLNKYT…LWAYETNKCN (63 aa)) form the LCN-type CS-alpha/beta domain. 4 cysteine pairs are disulfide-bonded: cysteine 31–cysteine 81, cysteine 35–cysteine 56, cysteine 42–cysteine 63, and cysteine 46–cysteine 65.

This sequence belongs to the long (4 C-C) scorpion toxin superfamily. Sodium channel inhibitor family. In terms of processing, a possible sulfoxide Met-85 on BmP09 could explain the difference of function between BmK AS-1 and BmP09. Expressed by the venom gland.

Its subcellular location is the secreted. Its function is as follows. Beta toxins bind voltage-independently at site-4 of sodium channels (Nav) and shift the voltage of activation toward more negative potentials thereby affecting sodium channel activation and promoting spontaneous and repetitive firing. BmKAs1 also significantly stimulates the binding of [3H]-ryanodine to ryanodine receptors on the sarcoplasmic reticulum of the skeletal muscle. It also displays antinociceptive effect in rat models. In terms of biological role, toxin BmP09 (which may be post-translationally modified) specifically and reversibly blocks large conductance calcium-dependent and voltage-dependent potassium channels (BK) but has no effect on sodium channels. The sequence is that of Beta-toxin BmKAs1 from Olivierus martensii (Manchurian scorpion).